Consider the following 230-residue polypeptide: MTTYLSQDRLRNKENDTMTYQHSKMYQSRTFLLFSALLLVAGQASAAVGSADAPAPYRVSSDCMVCHGMTGRDTLYPIVPRLAGQHKSYMEAQLKAYKDHSRADQNGEIYMWPVAQALDSAKITALADYFNAQKPPMQSSGIKHAGAKEGKAIFNQGVTNEQIPACMECHGSDGQGAGPFPRLAGQRYGYIIQQLTYFHNGTRVNTLMNQIAKNITVAQMKDVAAYLSSL.

The signal sequence occupies residues 1 to 47 (MTTYLSQDRLRNKENDTMTYQHSKMYQSRTFLLFSALLLVAGQASAA). Residues Cys-63, Cys-66, His-67, Cys-166, Cys-169, and His-170 each contribute to the heme c site.

Post-translationally, binds 2 heme c groups covalently per subunit.

Its subcellular location is the periplasm. In terms of biological role, diheme, high potential cytochrome c. This chain is Cytochrome c-552 (cyc1), found in Acidithiobacillus ferridurans.